Reading from the N-terminus, the 279-residue chain is Coiled-coil domain-containing protein 117 (279 aa).

The tract at residues 1–82 is disordered; that stretch reads MAALGRPFSG…REEEEDDDCP (82 aa). Residue Arg-48 is modified to Omega-N-methylarginine. A Phosphoserine modification is found at Ser-53. Residues 63-72 show a composition bias toward basic residues; sequence VSVHCKKKHK. Residues 141–168 adopt a coiled-coil conformation; that stretch reads QCEVARRKLQEIEDRIIDEDEEVEADRN. Residues 217–279 form a disordered region; the sequence is LLSDKPKPSS…ATSTEEEMEL (63 aa). Composition is skewed to polar residues over residues 224 to 235 and 262 to 272; these read PSSNTKNYTGES and SLYNSLETATS.

In terms of assembly, interacts with CIAO2B; the interaction is direct. Interacts with MMS19; the interaction is indirect.

The protein localises to the cytoplasm. The protein resides in the cytoskeleton. It is found in the spindle. It localises to the nucleus. Its function is as follows. Facilitates DNA repair, cell cycle progression, and cell proliferation through its interaction with CIAO2B. The sequence is that of Coiled-coil domain-containing protein 117 from Homo sapiens (Human).